Consider the following 187-residue polypeptide: Putative glutathione-dependent formaldehyde-activating enzyme (187 aa).

A CENP-V/GFA domain is found at 20–166 (FPGGKLYCHC…FESVGLKTYD (147 aa)). Zn(2+) contacts are provided by Cys27, Cys29, Cys48, Cys50, Cys53, Cys95, and Cys98.

It belongs to the Gfa family. Zn(2+) serves as cofactor.

It catalyses the reaction S-(hydroxymethyl)glutathione = glutathione + formaldehyde. Its pathway is one-carbon metabolism; formaldehyde degradation; formate from formaldehyde (glutathione route): step 1/3. In terms of biological role, catalyzes the condensation of formaldehyde and glutathione to S-hydroxymethylglutathione. This Talaromyces marneffei (strain ATCC 18224 / CBS 334.59 / QM 7333) (Penicillium marneffei) protein is Putative glutathione-dependent formaldehyde-activating enzyme.